A 248-amino-acid chain; its full sequence is Ubiquinone/menaquinone biosynthesis C-methyltransferase UbiE (248 aa).

Residues Ser68 and Asp92 each contribute to the S-adenosyl-L-methionine site.

The protein belongs to the class I-like SAM-binding methyltransferase superfamily. MenG/UbiE family.

The catalysed reaction is a 2-demethylmenaquinol + S-adenosyl-L-methionine = a menaquinol + S-adenosyl-L-homocysteine + H(+). It catalyses the reaction a 2-methoxy-6-(all-trans-polyprenyl)benzene-1,4-diol + S-adenosyl-L-methionine = a 5-methoxy-2-methyl-3-(all-trans-polyprenyl)benzene-1,4-diol + S-adenosyl-L-homocysteine + H(+). It functions in the pathway quinol/quinone metabolism; menaquinone biosynthesis; menaquinol from 1,4-dihydroxy-2-naphthoate: step 2/2. It participates in cofactor biosynthesis; ubiquinone biosynthesis. Methyltransferase required for the conversion of demethylmenaquinol (DMKH2) to menaquinol (MKH2) and the conversion of 2-polyprenyl-6-methoxy-1,4-benzoquinol (DDMQH2) to 2-polyprenyl-3-methyl-6-methoxy-1,4-benzoquinol (DMQH2). This is Ubiquinone/menaquinone biosynthesis C-methyltransferase UbiE from Rickettsia bellii (strain RML369-C).